The following is a 374-amino-acid chain: Dual-specificity RNA methyltransferase RlmN (374 aa).

The active-site Proton acceptor is the Glu-94. Residues 100–339 enclose the Radical SAM core domain; the sequence is EEDRATLCVS…VTIRKTRGDD (240 aa). Cysteines 107 and 344 form a disulfide. [4Fe-4S] cluster-binding residues include Cys-114, Cys-118, and Cys-121. S-adenosyl-L-methionine contacts are provided by residues 168 to 169, Ser-200, 222 to 224, and Asn-301; these read GE and SLH. Residue Cys-344 is the S-methylcysteine intermediate of the active site.

The protein belongs to the radical SAM superfamily. RlmN family. Requires [4Fe-4S] cluster as cofactor.

The protein resides in the cytoplasm. The enzyme catalyses adenosine(2503) in 23S rRNA + 2 reduced [2Fe-2S]-[ferredoxin] + 2 S-adenosyl-L-methionine = 2-methyladenosine(2503) in 23S rRNA + 5'-deoxyadenosine + L-methionine + 2 oxidized [2Fe-2S]-[ferredoxin] + S-adenosyl-L-homocysteine. The catalysed reaction is adenosine(37) in tRNA + 2 reduced [2Fe-2S]-[ferredoxin] + 2 S-adenosyl-L-methionine = 2-methyladenosine(37) in tRNA + 5'-deoxyadenosine + L-methionine + 2 oxidized [2Fe-2S]-[ferredoxin] + S-adenosyl-L-homocysteine. In terms of biological role, specifically methylates position 2 of adenine 2503 in 23S rRNA and position 2 of adenine 37 in tRNAs. m2A2503 modification seems to play a crucial role in the proofreading step occurring at the peptidyl transferase center and thus would serve to optimize ribosomal fidelity. This chain is Dual-specificity RNA methyltransferase RlmN, found in Vibrio vulnificus (strain CMCP6).